Reading from the N-terminus, the 503-residue chain is Rhomboid-type serine protease 2 (503 aa).

Positions 1–11 (MAAQSYYNGAY) are enriched in polar residues. Residues 1–66 (MAAQSYYNGA…SLRYSQQSIG (66 aa)) form a disordered region. The Cytoplasmic segment spans residues 1 to 136 (MAAQSYYNGA…QKKKGFFQKK (136 aa)). The helical transmembrane segment at 137 to 157 (IAYVTYILTIAQIIVFIVELV) threads the bilayer. The Extracellular portion of the chain corresponds to 158–253 (KMGQLTGSPI…DKPAPDQWFR (96 aa)). The chain crosses the membrane as a helical span at residues 254–274 (FIIPMFLHSGFVHIGFNLLVQ). Over 275–283 (MTMGADMER) the chain is Cytoplasmic. Residues 284 to 304 (MIGWWRYGLVYLSSGIWGFVL) traverse the membrane as a helical segment. Over 305–316 (GGNYAGQGEASC) the chain is Extracellular. The chain crosses the membrane as a helical span at residues 317 to 337 (GCSGALFGILALFVLDLLYGW). Catalysis depends on Ser-319, which acts as the Nucleophile. At 338 to 342 (NDRQN) the chain is on the cytoplasmic side. The helical transmembrane segment at 343–363 (PWVELIIMVLGIAVSFVLGLL) threads the bilayer. Residues 364-365 (PG) are Extracellular-facing. Residues 366–386 (LDNFSHLGGFTMGLALGLCVM) traverse the membrane as a helical segment. His-371 is an active-site residue. Topologically, residues 387–449 (RSPNALRERI…FAGRKPLWWA (63 aa)) are cytoplasmic. A helical transmembrane segment spans residues 450–470 (WWLVRLGALVAVLIGFILLIV). Over 471 to 503 (NFYKYPSSNCSWCYRFSCLPVNGWCDQGNLFSR) the chain is Extracellular.

The protein belongs to the peptidase S54 family.

The protein localises to the membrane. It catalyses the reaction Cleaves type-1 transmembrane domains using a catalytic dyad composed of serine and histidine that are contributed by different transmembrane domains.. Functionally, probable rhomboid-type serine protease that catalyzes intramembrane proteolysis. The sequence is that of Rhomboid-type serine protease 2 from Emericella nidulans (strain FGSC A4 / ATCC 38163 / CBS 112.46 / NRRL 194 / M139) (Aspergillus nidulans).